Reading from the N-terminus, the 782-residue chain is Endonuclease MutS2 (782 aa).

336–343 (GPNTGGKT) contributes to the ATP binding site. The region spanning 707 to 782 (LDLRGYRYEE…GFGVTVAELK (76 aa)) is the Smr domain.

Belongs to the DNA mismatch repair MutS family. MutS2 subfamily. Homodimer. Binds to stalled ribosomes, contacting rRNA.

Functionally, endonuclease that is involved in the suppression of homologous recombination and thus may have a key role in the control of bacterial genetic diversity. Acts as a ribosome collision sensor, splitting the ribosome into its 2 subunits. Detects stalled/collided 70S ribosomes which it binds and splits by an ATP-hydrolysis driven conformational change. Acts upstream of the ribosome quality control system (RQC), a ribosome-associated complex that mediates the extraction of incompletely synthesized nascent chains from stalled ribosomes and their subsequent degradation. Probably generates substrates for RQC. The protein is Endonuclease MutS2 of Staphylococcus epidermidis (strain ATCC 12228 / FDA PCI 1200).